The following is a 216-amino-acid chain: Adenylate kinase (216 aa).

10–15 serves as a coordination point for ATP; sequence GAGKGT. An NMP region spans residues 30–59; the sequence is STGDIFRAAIKNQTPMGVEAKKFIDKGELV. Residues Thr-31, Arg-36, 57-59, 85-88, and Gln-92 each bind AMP; these read ELV and GFPR. The interval 126–164 is LID; it reads GRFICRNCGTTYHRLYNPTKVEGTCDVCGGHDFYQRDDD. Position 127 (Arg-127) interacts with ATP. The Zn(2+) site is built by Cys-130 and Cys-133. Residue 136 to 137 coordinates ATP; that stretch reads TY. Zn(2+)-binding residues include Cys-150 and Cys-153. 2 residues coordinate AMP: Arg-161 and Arg-172. Position 200 (Gln-200) interacts with ATP.

Belongs to the adenylate kinase family. In terms of assembly, monomer.

The protein localises to the cytoplasm. It catalyses the reaction AMP + ATP = 2 ADP. Its pathway is purine metabolism; AMP biosynthesis via salvage pathway; AMP from ADP: step 1/1. Catalyzes the reversible transfer of the terminal phosphate group between ATP and AMP. Plays an important role in cellular energy homeostasis and in adenine nucleotide metabolism. This chain is Adenylate kinase, found in Limosilactobacillus fermentum (strain NBRC 3956 / LMG 18251) (Lactobacillus fermentum).